A 359-amino-acid chain; its full sequence is UDP-N-acetylglucosamine--N-acetylmuramyl-(pentapeptide) pyrophosphoryl-undecaprenol N-acetylglucosamine transferase (359 aa).

UDP-N-acetyl-alpha-D-glucosamine is bound by residues 15–17 (TGG), Asn-127, Arg-166, Ser-191, Ile-245, 264–269 (ALTVSE), and Gln-290.

It belongs to the glycosyltransferase 28 family. MurG subfamily.

Its subcellular location is the cell inner membrane. The catalysed reaction is di-trans,octa-cis-undecaprenyl diphospho-N-acetyl-alpha-D-muramoyl-L-alanyl-D-glutamyl-meso-2,6-diaminopimeloyl-D-alanyl-D-alanine + UDP-N-acetyl-alpha-D-glucosamine = di-trans,octa-cis-undecaprenyl diphospho-[N-acetyl-alpha-D-glucosaminyl-(1-&gt;4)]-N-acetyl-alpha-D-muramoyl-L-alanyl-D-glutamyl-meso-2,6-diaminopimeloyl-D-alanyl-D-alanine + UDP + H(+). The protein operates within cell wall biogenesis; peptidoglycan biosynthesis. Cell wall formation. Catalyzes the transfer of a GlcNAc subunit on undecaprenyl-pyrophosphoryl-MurNAc-pentapeptide (lipid intermediate I) to form undecaprenyl-pyrophosphoryl-MurNAc-(pentapeptide)GlcNAc (lipid intermediate II). The sequence is that of UDP-N-acetylglucosamine--N-acetylmuramyl-(pentapeptide) pyrophosphoryl-undecaprenol N-acetylglucosamine transferase from Pseudomonas entomophila (strain L48).